Reading from the N-terminus, the 297-residue chain is 2-phospho-L-lactate transferase (297 aa).

Asp49 provides a ligand contact to 7,8-didemethyl-8-hydroxy-5-deazariboflavin.

Belongs to the CofD family. In terms of assembly, homodimer. The cofactor is Mg(2+).

The enzyme catalyses (2S)-lactyl-2-diphospho-5'-guanosine + 7,8-didemethyl-8-hydroxy-5-deazariboflavin = oxidized coenzyme F420-0 + GMP + H(+). It participates in cofactor biosynthesis; coenzyme F420 biosynthesis. Functionally, catalyzes the transfer of the 2-phospholactate moiety from (2S)-lactyl-2-diphospho-5'-guanosine to 7,8-didemethyl-8-hydroxy-5-deazariboflavin (FO) with the formation of oxidized coenzyme F420-0 and GMP. The sequence is that of 2-phospho-L-lactate transferase from Methanospirillum hungatei JF-1 (strain ATCC 27890 / DSM 864 / NBRC 100397 / JF-1).